Consider the following 684-residue polypeptide: MSAIPAEESDQLLIRPLGAGQEVGRSCIILEFKGRKIMLDCGIHPGLEGMDALPYIDLIDPAEIDLLLISHFHLDHCGALPWFLQKTSFKGRTFMTHATKAIYRWLLSDYVKVSNISADDMLYTETDLEESMDKIETINFHEVKEVAGIKFWCYHAGHVLGAAMFMIEIAGVKLLYTGDFSRQEDRHLMAAEIPNIKPDILIIESTYGTHIHEKREEREARFCNTVHDIVNRGGRGLIPVFALGRAQELLLILDEYWQNHPELHDIPIYYASSLAKKCMAVYQTYVNAMNDKIRKQININNPFVFKHISNLKSMDHFDDIGPSVVMASPGMMQSGLSRELFESWCTDKRNGVIIAGYCVEGTLAKHIMSEPEEITTMSGQKLPLKMSVDYISFSAHTDYQQTSEFIRALKPPHVILVHGEQNEMARLKAALIREYEDNDEVHIEVHNPRNTEAVTLNFRGEKLAKVMGFLADKKPEQGQRVSGILVKRNFNYHILSPCDLSNYTDLAMSTVKQTQAIPYTGPFNLLYYQLQKLTGDVEELEIQEKPALKVFKNITVIQEPGMVVLEWLANPSNDMYADTVTTVILEVQSNPKIRKGAVQKVSKKLEMHVYSKRLEIMLQDIFGEDCVSVKDGSILSVTVDGKTANINLETRTVECEEGSEDDESLREMVELAAQRLYEALTPVH.

Serine 2 is subject to N-acetylserine. Histidine 71, histidine 73, aspartate 75, histidine 76, histidine 158, and aspartate 179 together coordinate Zn(2+). The active-site Proton donor is histidine 396. Histidine 418 lines the Zn(2+) pocket. Glycyl lysine isopeptide (Lys-Gly) (interchain with G-Cter in SUMO) cross-links involve residues lysine 462, lysine 465, and lysine 545. Serine 659 bears the Phosphoserine mark. Threonine 681 carries the phosphothreonine modification.

The protein belongs to the metallo-beta-lactamase superfamily. RNA-metabolizing metallo-beta-lactamase-like family. CPSF3 subfamily. In terms of assembly, component of the cleavage and polyadenylation specificity factor (CPSF) complex, composed of CPSF1, CPSF2, CPSF3, CPSF4 and FIP1L1. Interacts with CPSF2, CSTF2 and SYMPK. Interacts with TUT1; the interaction is direct and mediates the recruitment of the CPSF complex on the 3'UTR of pre-mRNAs. Interacts with WDR33. Interacts with ZC3H3. It depends on Zn(2+) as a cofactor. Sumoylated on Lys-462, Lys-465 and Lys-545, preferentially by SUMO3.

It localises to the nucleus. In terms of biological role, component of the cleavage and polyadenylation specificity factor (CPSF) complex that plays a key role in pre-mRNA 3'-end formation, recognizing the AAUAAA signal sequence and interacting with poly(A) polymerase and other factors to bring about cleavage and poly(A) addition. Has endonuclease activity, and functions as an mRNA 3'-end-processing endonuclease. Also involved in the histone 3'-end pre-mRNA processing. U7 snRNP-dependent protein that induces both the 3'-endoribonucleolytic cleavage of histone pre-mRNAs and acts as a 5' to 3' exonuclease for degrading the subsequent downstream cleavage product (DCP) of mature histone mRNAs. Cleavage occurs after the 5'-ACCCA-3' sequence in the histone pre-mRNA leaving a 3'hydroxyl group on the upstream fragment containing the stem loop (SL) and 5' phosphate on the downstream cleavage product (DCP) starting with CU nucleotides. The U7-dependent 5' to 3' exonuclease activity is processive and degrades the DCP RNA substrate even after complete removal of the U7-binding site. Binds to the downstream cleavage product (DCP) of histone pre-mRNAs and the cleaved DCP RNA substrate in a U7 snRNP dependent manner. Required for entering/progressing through S-phase of the cell cycle. Required for the selective processing of microRNAs (miRNAs) during embryonic stem cell differentiation via its interaction with ISY1. Required for the biogenesis of all miRNAs from the pri-miR-17-92 primary transcript except miR-92a. Only required for the biogenesis of miR-290 and miR-96 from the pri-miR-290-295 and pri-miR-96-183 primary transcripts, respectively. In Bos taurus (Bovine), this protein is Cleavage and polyadenylation specificity factor subunit 3 (CPSF3).